A 267-amino-acid polypeptide reads, in one-letter code: MKKVTIRDFIKKKSTKEKITMLTAYDYPTAKIISNTGLDSILVGDSLGMVVLGYPNTLNVTMRDMISHTRAVARANPPQLIVADMPFLSYEIDTKSAVKNAGLLVKAGSDAIKLEGGEEMKDTVKAIVKAGIPVMGHIGLTPQRFLRLGGFRTIGKTKQEEDQLIKDSLELEDAGVFSLVIENTYVDIAKRITEKLNIPTICIGAGPYCDGQVLVINDLLGLSEFTPYFAKSYVNLKEIISNAINQYIIDVKNNKFPEKQHYKERES.

The Mg(2+) site is built by aspartate 45 and aspartate 84. 3-methyl-2-oxobutanoate-binding positions include 45–46 (DS), aspartate 84, and lysine 113. Residue glutamate 115 coordinates Mg(2+). The active-site Proton acceptor is glutamate 182.

The protein belongs to the PanB family. In terms of assembly, homodecamer; pentamer of dimers. Mg(2+) serves as cofactor.

It is found in the cytoplasm. It carries out the reaction 3-methyl-2-oxobutanoate + (6R)-5,10-methylene-5,6,7,8-tetrahydrofolate + H2O = 2-dehydropantoate + (6S)-5,6,7,8-tetrahydrofolate. The protein operates within cofactor biosynthesis; coenzyme A biosynthesis. Catalyzes the reversible reaction in which hydroxymethyl group from 5,10-methylenetetrahydrofolate is transferred onto alpha-ketoisovalerate to form ketopantoate. In Saccharolobus islandicus (strain Y.N.15.51 / Yellowstone #2) (Sulfolobus islandicus), this protein is 3-methyl-2-oxobutanoate hydroxymethyltransferase.